The following is an 800-amino-acid chain: Nucleolar complex protein 3 homolog (800 aa).

Composition is skewed to basic residues over residues 1–19 (MGPA…RKLL) and 42–53 (KKQRKEQRKLHK). Disordered stretches follow at residues 1-91 (MGPA…TDMM) and 167-197 (KPVL…SAPL). Basic and acidic residues predominate over residues 65–74 (PLERYKKRPE). A coiled-coil region spans residues 449-490 (SFKEKRKNLSRMQRKWKKAEEKLQKELLEAEATESKEKKIKL). The segment at 780-800 (LQEEPEQMSLDFTSPHTQQEP) is disordered. Residues 789-800 (LDFTSPHTQQEP) show a composition bias toward polar residues.

Belongs to the CBF/MAK21 family.

Its subcellular location is the nucleus. It localises to the nucleolus. This Danio rerio (Zebrafish) protein is Nucleolar complex protein 3 homolog (noc3l).